A 151-amino-acid chain; its full sequence is U1 small nuclear ribonucleoprotein C (151 aa).

A Matrin-type zinc finger spans residues 4–36; that stretch reads FYCEYCSIYLTHSSPAGRKQHSQGRKHISAKVE.

Belongs to the U1 small nuclear ribonucleoprotein C family. U1 snRNP is composed of the 7 core Sm proteins B/B', D1, D2, D3, E, F and G that assemble in a heptameric protein ring on the Sm site of the small nuclear RNA to form the core snRNP, and at least 3 U1 snRNP-specific proteins U1-70K, U1-A and U1-C. U1-C interacts with U1 snRNA and the 5' splice-site region of the pre-mRNA.

The protein resides in the nucleus. In terms of biological role, component of the spliceosomal U1 snRNP, which is essential for recognition of the pre-mRNA 5' splice-site and the subsequent assembly of the spliceosome. U1-C is directly involved in initial 5' splice-site recognition for both constitutive and regulated alternative splicing. The interaction with the 5' splice-site seems to precede base-pairing between the pre-mRNA and the U1 snRNA. Stimulates commitment or early (E) complex formation by stabilizing the base pairing of the 5' end of the U1 snRNA and the 5' splice-site region. This Theileria annulata protein is U1 small nuclear ribonucleoprotein C.